A 173-amino-acid polypeptide reads, in one-letter code: Protein GrpE (173 aa).

The segment covering 1–28 (MTEEEKTKSEAEEIEQNNKEEEQEKSVE) has biased composition (basic and acidic residues). The segment at 1-30 (MTEEEKTKSEAEEIEQNNKEEEQEKSVEEL) is disordered.

This sequence belongs to the GrpE family. As to quaternary structure, homodimer.

It localises to the cytoplasm. Functionally, participates actively in the response to hyperosmotic and heat shock by preventing the aggregation of stress-denatured proteins, in association with DnaK and GrpE. It is the nucleotide exchange factor for DnaK and may function as a thermosensor. Unfolded proteins bind initially to DnaJ; upon interaction with the DnaJ-bound protein, DnaK hydrolyzes its bound ATP, resulting in the formation of a stable complex. GrpE releases ADP from DnaK; ATP binding to DnaK triggers the release of the substrate protein, thus completing the reaction cycle. Several rounds of ATP-dependent interactions between DnaJ, DnaK and GrpE are required for fully efficient folding. This is Protein GrpE from Methanosphaera stadtmanae (strain ATCC 43021 / DSM 3091 / JCM 11832 / MCB-3).